Consider the following 417-residue polypeptide: MAGPFSRLLSARPGLRLLALAGAGSLAAGFLLRPEPVRAASERRRLYPPSAEYPDLRKHNNCMASHLTPAVYARLCDKTTPTGWTLDQCIQTGVDNPGHPFIKTVGMVAGDEETYEVFADLFDPVIQERHNGYDPRTMKHTTDLDASKIRSGYFDERYVLSSRVRTGRSIRGLSLPPACTRAERREVERVVVDALSGLKGDLAGRYYRLSEMTEAEQQQLIDDHFLFDKPVSPLLTAAGMARDWPDARGIWHNNEKSFLIWVNEEDHTRVISMEKGGNMKRVFERFCRGLKEVERLIQERGWEFMWNERLGYILTCPSNLGTGLRAGVHIKLPLLSKDSRFPKILENLRLQKRGTGGVDTAATGGVFDISNLDRLGKSEVELVQLVIDGVNYLIDCERRLERGQDIRIPTPVIHTKH.

A mitochondrion-targeting transit peptide spans 1 to 39; that stretch reads MAGPFSRLLSARPGLRLLALAGAGSLAAGFLLRPEPVRA. The cardiolipin-binding stretch occupies residues 40–64; that stretch reads ASERRRLYPPSAEYPDLRKHNNCMA. The Phosphagen kinase N-terminal domain occupies 45–131; it reads RLYPPSAEYP…FDPVIQERHN (87 aa). S151 is modified (phosphoserine). In terms of domain architecture, Phosphagen kinase C-terminal spans 158 to 400; the sequence is YVLSSRVRTG…NYLIDCERRL (243 aa). 161–165 lines the ATP pocket; it reads SSRVR. Residue S196 is modified to Phosphoserine. T213 carries the phosphothreonine modification. H224 contacts ATP. At S232 the chain carries Phosphoserine. Residues R269, R325, 353-358, and D368 each bind ATP; that span reads RGTGGV. T355 carries the post-translational modification Phosphothreonine.

Belongs to the ATP:guanido phosphotransferase family. In terms of assembly, exists as an octamer composed of four MTCK homodimers.

The protein localises to the mitochondrion inner membrane. It catalyses the reaction creatine + ATP = N-phosphocreatine + ADP + H(+). Its function is as follows. Reversibly catalyzes the transfer of phosphate between ATP and various phosphogens (e.g. creatine phosphate). Creatine kinase isoenzymes play a central role in energy transduction in tissues with large, fluctuating energy demands, such as skeletal muscle, heart, brain and spermatozoa. The chain is Creatine kinase U-type, mitochondrial (CKMT1A) from Homo sapiens (Human).